The following is a 687-amino-acid chain: Glycine--tRNA ligase beta subunit (687 aa).

It belongs to the class-II aminoacyl-tRNA synthetase family. As to quaternary structure, tetramer of two alpha and two beta subunits.

Its subcellular location is the cytoplasm. The catalysed reaction is tRNA(Gly) + glycine + ATP = glycyl-tRNA(Gly) + AMP + diphosphate. This chain is Glycine--tRNA ligase beta subunit, found in Geobacter sp. (strain M21).